A 163-amino-acid polypeptide reads, in one-letter code: F-box protein At2g35280 (163 aa).

An F-box domain is found at 8–57 (ISRLEALPQDLLREIVAKIGVKSAEDYHNCILSCKELGASANDERVLKTL).

The polypeptide is F-box protein At2g35280 (Arabidopsis thaliana (Mouse-ear cress)).